A 602-amino-acid polypeptide reads, in one-letter code: Leucine-rich repeat-containing protein 40 (602 aa).

Phosphoserine is present on Ser71. LRR repeat units lie at residues 83 to 104, 106 to 127, 129 to 150, 152 to 173, 175 to 196, 198 to 219, 221 to 242, 244 to 265, 266 to 286, 290 to 311, 313 to 335, 336 to 356, 400 to 421, 426 to 447, 450 to 472, 473 to 494, 496 to 517, 519 to 540, 543 to 564, and 566 to 586; these read DLTK…LRLL, ALTV…IREL, NLQK…ITNL, NLKC…FEQL, NLED…FSSL, SLVR…INRM, RLKH…LAGM, SLEL…PSCS, LLKE…EHLK, SILV…IILL, SLER…GNLH, LKFL…IISK, TLKI…VFDA, IVTS…MVEL, MVSD…CVLQ, KLTF…MESL, RLQT…LYRI, TLET…KMKM, NLTT…LGNC, and NLRT…AILM.

The protein is Leucine-rich repeat-containing protein 40 (LRRC40) of Homo sapiens (Human).